The following is a 295-amino-acid chain: Light-independent protochlorophyllide reductase iron-sulfur ATP-binding protein (295 aa).

ATP contacts are provided by residues 39 to 44 (GIGKST) and Lys-68. Position 43 (Ser-43) interacts with Mg(2+). 2 residues coordinate [4Fe-4S] cluster: Cys-124 and Cys-158. 209–210 (NR) contacts ATP.

It belongs to the NifH/BchL/ChlL family. As to quaternary structure, homodimer. Protochlorophyllide reductase is composed of three subunits; ChlL, ChlN and ChlB. [4Fe-4S] cluster is required as a cofactor.

It catalyses the reaction chlorophyllide a + oxidized 2[4Fe-4S]-[ferredoxin] + 2 ADP + 2 phosphate = protochlorophyllide a + reduced 2[4Fe-4S]-[ferredoxin] + 2 ATP + 2 H2O. The protein operates within porphyrin-containing compound metabolism; chlorophyll biosynthesis (light-independent). Functionally, component of the dark-operative protochlorophyllide reductase (DPOR) that uses Mg-ATP and reduced ferredoxin to reduce ring D of protochlorophyllide (Pchlide) to form chlorophyllide a (Chlide). This reaction is light-independent. The L component serves as a unique electron donor to the NB-component of the complex, and binds Mg-ATP. This is Light-independent protochlorophyllide reductase iron-sulfur ATP-binding protein from Prochlorococcus marinus (strain MIT 9215).